The primary structure comprises 346 residues: Enoyl-[acyl-carrier-protein] reductase, mitochondrial (346 aa).

Residues Met1 to Leu22 constitute a mitochondrion transit peptide. Residue Tyr59 is the Proton donor of the active site. Residues Asn131, Asn157 to Val160, Arg180 to Arg182, Tyr249 to Met252, Val274 to Val276, and Lys332 each bind NADP(+).

This sequence belongs to the zinc-containing alcohol dehydrogenase family. Quinone oxidoreductase subfamily. As to quaternary structure, homodimer.

Its subcellular location is the mitochondrion. It catalyses the reaction a 2,3-saturated acyl-[ACP] + NADP(+) = a (2E)-enoyl-[ACP] + NADPH + H(+). In terms of biological role, catalyzes the NADPH-dependent reduction of trans-2-enoyl thioesters in mitochondrial fatty acid synthesis (fatty acid synthesis type II). Fatty acid chain elongation in mitochondria uses acyl carrier protein (ACP) as an acyl group carrier, but the enzyme accepts both ACP and CoA thioesters as substrates in vitro. May provide the octanoyl chain used for lipoic acid biosynthesis, regulating protein lipoylation and mitochondrial respiratory activity. Involved in iron homeostasis; affecting Fe-S cluster assembly and ceramide metabolism. Required for proper morphology and bioenergetic functions of mitochondria. Required for maintenance of neurons. This Caenorhabditis elegans protein is Enoyl-[acyl-carrier-protein] reductase, mitochondrial.